The primary structure comprises 275 residues: Bis(5'-nucleosyl)-tetraphosphatase, symmetrical (275 aa).

It belongs to the Ap4A hydrolase family.

It carries out the reaction P(1),P(4)-bis(5'-adenosyl) tetraphosphate + H2O = 2 ADP + 2 H(+). In terms of biological role, hydrolyzes diadenosine 5',5'''-P1,P4-tetraphosphate to yield ADP. This Photorhabdus laumondii subsp. laumondii (strain DSM 15139 / CIP 105565 / TT01) (Photorhabdus luminescens subsp. laumondii) protein is Bis(5'-nucleosyl)-tetraphosphatase, symmetrical.